An 85-amino-acid chain; its full sequence is UPF0291 protein SpyM3_1470 (85 aa).

Residues 62–85 (TPEKLRQVQREKGLHGRSLDDPKS) form a disordered region.

It belongs to the UPF0291 family.

Its subcellular location is the cytoplasm. The polypeptide is UPF0291 protein SpyM3_1470 (Streptococcus pyogenes serotype M3 (strain ATCC BAA-595 / MGAS315)).